The chain runs to 233 residues: Large ribosomal subunit protein uL1 (233 aa).

It belongs to the universal ribosomal protein uL1 family. In terms of assembly, part of the 50S ribosomal subunit.

Its function is as follows. Binds directly to 23S rRNA. The L1 stalk is quite mobile in the ribosome, and is involved in E site tRNA release. Functionally, protein L1 is also a translational repressor protein, it controls the translation of the L11 operon by binding to its mRNA. The polypeptide is Large ribosomal subunit protein uL1 (Trichlorobacter lovleyi (strain ATCC BAA-1151 / DSM 17278 / SZ) (Geobacter lovleyi)).